Here is a 513-residue protein sequence, read N- to C-terminus: Trigger factor (513 aa).

A PPIase FKBP-type domain is found at 164–249 (GDQIIIDFLG…VKAVKNAGEF (86 aa)). Residues 436-513 (QAAIEAEEGA…KAPAKKKAEG (78 aa)) form a disordered region. Residues 452–461 (AKKAPAKKKA) show a composition bias toward basic residues. Residues 489-498 (ADEAPAAEEA) are compositionally biased toward low complexity. The segment covering 501–513 (AKKKAPAKKKAEG) has biased composition (basic residues).

This sequence belongs to the FKBP-type PPIase family. Tig subfamily.

It is found in the cytoplasm. The enzyme catalyses [protein]-peptidylproline (omega=180) = [protein]-peptidylproline (omega=0). Functionally, involved in protein export. Acts as a chaperone by maintaining the newly synthesized protein in an open conformation. Functions as a peptidyl-prolyl cis-trans isomerase. In Novosphingobium aromaticivorans (strain ATCC 700278 / DSM 12444 / CCUG 56034 / CIP 105152 / NBRC 16084 / F199), this protein is Trigger factor.